A 263-amino-acid chain; its full sequence is Dermonecrotic toxin SpaSicTox-betaIF1 (263 aa).

Glu-15 and Asp-17 together coordinate Mg(2+). His-31 acts as the Nucleophile in catalysis. 2 cysteine pairs are disulfide-bonded: Cys-35–Cys-41 and Cys-37–Cys-179. Residue Asp-75 participates in Mg(2+) binding.

It belongs to the arthropod phospholipase D family. Class II subfamily. Requires Mg(2+) as cofactor. Expressed by the venom gland.

It localises to the secreted. The catalysed reaction is an N-(acyl)-sphingosylphosphocholine = an N-(acyl)-sphingosyl-1,3-cyclic phosphate + choline. It carries out the reaction an N-(acyl)-sphingosylphosphoethanolamine = an N-(acyl)-sphingosyl-1,3-cyclic phosphate + ethanolamine. The enzyme catalyses a 1-acyl-sn-glycero-3-phosphocholine = a 1-acyl-sn-glycero-2,3-cyclic phosphate + choline. It catalyses the reaction a 1-acyl-sn-glycero-3-phosphoethanolamine = a 1-acyl-sn-glycero-2,3-cyclic phosphate + ethanolamine. Its function is as follows. Dermonecrotic toxins cleave the phosphodiester linkage between the phosphate and headgroup of certain phospholipids (sphingolipid and lysolipid substrates), forming an alcohol (often choline) and a cyclic phosphate. This toxin acts on sphingomyelin (SM). It may also act on ceramide phosphoethanolamine (CPE), lysophosphatidylcholine (LPC) and lysophosphatidylethanolamine (LPE), but not on lysophosphatidylserine (LPS), and lysophosphatidylglycerol (LPG). It acts by transphosphatidylation, releasing exclusively cyclic phosphate products as second products. Induces dermonecrosis, hemolysis, increased vascular permeability, edema, inflammatory response, and platelet aggregation. This is Dermonecrotic toxin SpaSicTox-betaIF1 from Sicarius patagonicus (Six-eyed sand spider).